The following is a 219-amino-acid chain: Probable nicotinate-nucleotide adenylyltransferase (219 aa).

The protein belongs to the NadD family.

It catalyses the reaction nicotinate beta-D-ribonucleotide + ATP + H(+) = deamido-NAD(+) + diphosphate. Its pathway is cofactor biosynthesis; NAD(+) biosynthesis; deamido-NAD(+) from nicotinate D-ribonucleotide: step 1/1. Functionally, catalyzes the reversible adenylation of nicotinate mononucleotide (NaMN) to nicotinic acid adenine dinucleotide (NaAD). In Pseudomonas putida (strain GB-1), this protein is Probable nicotinate-nucleotide adenylyltransferase.